An 85-amino-acid chain; its full sequence is uncharacterized protein (85 aa).

Belongs to the SF3B5 family.

This is an uncharacterized protein from Schizosaccharomyces pombe (strain 972 / ATCC 24843) (Fission yeast).